The chain runs to 176 residues: Cytidylate kinase (176 aa).

7–15 (GPPGSGTTS) serves as a coordination point for ATP.

The protein belongs to the cytidylate kinase family. Type 2 subfamily.

The protein localises to the cytoplasm. It carries out the reaction CMP + ATP = CDP + ADP. The catalysed reaction is dCMP + ATP = dCDP + ADP. This chain is Cytidylate kinase, found in Methanosphaerula palustris (strain ATCC BAA-1556 / DSM 19958 / E1-9c).